The sequence spans 206 residues: Dephospho-CoA kinase (206 aa).

One can recognise a DPCK domain in the interval 4–200 (IVALTGGIGS…AYYLQLASQF (197 aa)). Position 12 to 17 (12 to 17 (GSGKST)) interacts with ATP.

The protein belongs to the CoaE family.

The protein localises to the cytoplasm. It catalyses the reaction 3'-dephospho-CoA + ATP = ADP + CoA + H(+). Its pathway is cofactor biosynthesis; coenzyme A biosynthesis; CoA from (R)-pantothenate: step 5/5. In terms of biological role, catalyzes the phosphorylation of the 3'-hydroxyl group of dephosphocoenzyme A to form coenzyme A. The sequence is that of Dephospho-CoA kinase from Escherichia coli O6:H1 (strain CFT073 / ATCC 700928 / UPEC).